The sequence spans 876 residues: Alanine--tRNA ligase (876 aa).

Residues His565, His569, Cys667, and His671 each contribute to the Zn(2+) site.

It belongs to the class-II aminoacyl-tRNA synthetase family. It depends on Zn(2+) as a cofactor.

It is found in the cytoplasm. The catalysed reaction is tRNA(Ala) + L-alanine + ATP = L-alanyl-tRNA(Ala) + AMP + diphosphate. In terms of biological role, catalyzes the attachment of alanine to tRNA(Ala) in a two-step reaction: alanine is first activated by ATP to form Ala-AMP and then transferred to the acceptor end of tRNA(Ala). Also edits incorrectly charged Ser-tRNA(Ala) and Gly-tRNA(Ala) via its editing domain. The chain is Alanine--tRNA ligase from Staphylococcus aureus (strain Mu3 / ATCC 700698).